A 233-amino-acid chain; its full sequence is Large ribosomal subunit protein uL1 (233 aa).

The protein belongs to the universal ribosomal protein uL1 family. As to quaternary structure, part of the 50S ribosomal subunit.

Binds directly to 23S rRNA. The L1 stalk is quite mobile in the ribosome, and is involved in E site tRNA release. Functionally, protein L1 is also a translational repressor protein, it controls the translation of the L11 operon by binding to its mRNA. In Zymomonas mobilis subsp. mobilis (strain ATCC 31821 / ZM4 / CP4), this protein is Large ribosomal subunit protein uL1.